We begin with the raw amino-acid sequence, 446 residues long: uncharacterized protein (446 aa).

A phosphoserine mark is found at Ser-393 and Ser-397. Residues 411 to 431 (LSSTERRDLDRVRDKQKKQDQ) are disordered.

This sequence belongs to the IFRD family.

Its subcellular location is the cytoplasm. This is an uncharacterized protein from Schizosaccharomyces pombe (strain 972 / ATCC 24843) (Fission yeast).